We begin with the raw amino-acid sequence, 346 residues long: Methylthioribose-1-phosphate isomerase (346 aa).

Substrate contacts are provided by residues 46 to 48 (RGA), Arg-89, and Gln-196. Catalysis depends on Asp-237, which acts as the Proton donor. 247-248 (NK) is a substrate binding site.

It belongs to the eIF-2B alpha/beta/delta subunits family. MtnA subfamily.

It carries out the reaction 5-(methylsulfanyl)-alpha-D-ribose 1-phosphate = 5-(methylsulfanyl)-D-ribulose 1-phosphate. It functions in the pathway amino-acid biosynthesis; L-methionine biosynthesis via salvage pathway; L-methionine from S-methyl-5-thio-alpha-D-ribose 1-phosphate: step 1/6. Functionally, catalyzes the interconversion of methylthioribose-1-phosphate (MTR-1-P) into methylthioribulose-1-phosphate (MTRu-1-P). The polypeptide is Methylthioribose-1-phosphate isomerase (Citrifermentans bemidjiense (strain ATCC BAA-1014 / DSM 16622 / JCM 12645 / Bem) (Geobacter bemidjiensis)).